Reading from the N-terminus, the 301-residue chain is Glycosyltransferase GlyG (301 aa).

This sequence belongs to the glycosyltransferase 2 family.

The protein operates within protein modification; protein glycosylation. Involved in the polymorphic O-glycosylation of the serine-rich repeat protein PsrP. Catalyzes the third step in glycosylation PsrP in this bacteria. Transfers glucose from UDP-glucose to the terminal glucose moiety of already-glycosylated PsrP (using truncated substrates with PsrP SSR1-GlcNAc-Glc). Has a marked preference for PsrP substrate that has already been modified by GlcNAc and glucose. In vitro has hydrolytic activity against UDP-glucose and to a lesser extent against UDP-galactose. In terms of biological role, also catalyzes the fourth step in glycosylation of the serine-rich repeat protein PsrP in this bacteria. Can transfer the sugar from UDP-glucose (and much less well from UDP-galactose) to the terminal sugar moiety of PsrP-GlcNAc-Glc-Gal or of PsrP-GlcNAc-Glc-Glc. This is Glycosyltransferase GlyG from Streptococcus pneumoniae serotype 4 (strain ATCC BAA-334 / TIGR4).